The chain runs to 193 residues: CRIB domain-containing protein RIC5 (193 aa).

Positions 29–42 constitute a CRIB domain; sequence IGIPTDVKHVAHIG. The tract at residues 42-193 is disordered; sequence GWEGPSATTP…CAGLGSSTGR (152 aa). Over residues 55–67 the composition is skewed to basic and acidic residues; it reads HDFKPTDQTKTET. Polar residues predominate over residues 90 to 100; it reads STGNNSPTESP. Positions 123-134 are enriched in low complexity; it reads GSGSESGSGLEL.

In terms of assembly, interacts with ARAC11/ROP1. In terms of tissue distribution, expressed in flowers and pollen.

It is found in the cell membrane. Its function is as follows. Functions as a downstream effector of Rho-related GTP binding proteins of the 'Rho of Plants' (ROPs) family. Participates in the propagation of ROP GTPase signals in specific cellular responses. Is involved in pollen tube growth regulation through its interaction with ARAC11/ROP1. In Arabidopsis thaliana (Mouse-ear cress), this protein is CRIB domain-containing protein RIC5 (RIC5).